The primary structure comprises 541 residues: MDRFGDISEGEVDHSFFDSDFEDAKKCESNSIFDKQNDDDLKEGINKDTKNVNLKFGVQNDHLKEKIDNNTENVNLKLGLQTTENYLTQKGNERKANFSSKEQHIENDPTQARSSSVLTSSRSKKSCDATKGHKLNLPVPDRIPKIVKGEDDYYTDGEESSDDGKKYVRSKSAKPSSNLKKNVSKKYSSSSLSSSSSRSNSDCSDMGSDRQRRSESHSSGKCVSSVTPSSPKQRCKSGRKSSAQPSSTKQKTGDYHESEGNVPDITPLSTPDVSPAQSLELGQPPDQKVKVKKQENVSRDVYEDAEALKNDSRCVKSAKRKEKHGQSFAPKSSVLDANLDRRSKQKVLHDTMDLNHLLKAFLQLDKKGPQKHHFEQPAIIPRKNYSFTREEVRQIDRENQRLLKELSRQAEKPGSKSTIPGRSIGHPPKLYHSALNRQREQQRIERENMALLKRLEAVKPTVGMKRSEQLMDYHRNMSYLNPSPSVRRVRSTLGHYSPLRGASRTSSATSGLSCKTDRSVLDTSNGFLLRPKPPNVRTAWL.

2 positions are modified to phosphoserine: Ser-8 and Ser-19. Disordered regions lie at residues 28–47 (ESNS…GINK), 93–296 (ERKA…KQEN), 313–337 (RCVK…VLDA), 406–430 (LSRQ…PPKL), and 495–514 (HYSP…GLSC). Basic and acidic residues-rich tracts occupy residues 35–47 (KQND…GINK), 93–107 (ERKA…HIEN), and 142–151 (RIPKIVKGED). Positions 152 to 161 (DYYTDGEESS) are enriched in acidic residues. Thr-155 carries the phosphothreonine modification. Residues Ser-160 and Ser-161 each carry the phosphoserine modification. The segment covering 176–201 (SSNLKKNVSKKYSSSSLSSSSSRSNS) has biased composition (low complexity). A compositionally biased stretch (basic and acidic residues) spans 207–218 (GSDRQRRSESHS). 2 stretches are compositionally biased toward polar residues: residues 219–232 (SGKC…SSPK) and 240–250 (KSSAQPSSTKQ). Residue Ser-230 is modified to Phosphoserine. The residue at position 258 (Ser-258) is a Phosphoserine. The segment covering 267–277 (PLSTPDVSPAQ) has biased composition (polar residues). Residues 287-296 (QKVKVKKQEN) are compositionally biased toward basic and acidic residues. A coiled-coil region spans residues 382-459 (RKNYSFTREE…ALLKRLEAVK (78 aa)). Polar residues predominate over residues 503–513 (SRTSSATSGLS).

Belongs to the CFAP97 family. As to expression, highly expressed in testis with lower levels detected in other tissues including lung, heart and kidney.

The protein is Cilia- and flagella-associated protein 97 of Mus musculus (Mouse).